The primary structure comprises 1454 residues: Probable cleavage and polyadenylation specificity factor subunit 1 (1454 aa).

The interval 736 to 765 (KQSNTRKRKRLGHDAIQSSRGGEQSDAIDP) is disordered.

Belongs to the CPSF1 family. As to quaternary structure, CPSF is a heterotetramer composed of four distinct subunits 160 (cpsf-1), 100 (cpsf-2), 70 (cpsf-3), and 30 kDa (cpsf-4).

The protein resides in the nucleus. Its function is as follows. CPSF plays a key role in pre-mRNA 3'-end formation, recognizing the AAUAAA signal sequence and interacting with poly(A)polymerase and other factors to bring about cleavage and poly(A) addition. This subunit is involved in the RNA recognition step of the polyadenylation reaction. The chain is Probable cleavage and polyadenylation specificity factor subunit 1 (cpsf-1) from Caenorhabditis elegans.